A 370-amino-acid polypeptide reads, in one-letter code: GTPase Obg (370 aa).

Residues 1–159 (MKFIDEARIE…RMLKLELKVL (159 aa)) enclose the Obg domain. The tract at residues 128–147 (LHFKSSTNRAPRQKTDGKPG) is disordered. Positions 160–334 (ADVGLLGMPN…LCYAIYDYLS (175 aa)) constitute an OBG-type G domain. GTP-binding positions include 166–173 (GMPNAGKS), 191–195 (FTTLA), 213–216 (DIPG), 284–287 (NKLD), and 315–317 (SAL). The Mg(2+) site is built by serine 173 and threonine 193.

It belongs to the TRAFAC class OBG-HflX-like GTPase superfamily. OBG GTPase family. Monomer. Mg(2+) is required as a cofactor.

The protein resides in the cytoplasm. In terms of biological role, an essential GTPase which binds GTP, GDP and possibly (p)ppGpp with moderate affinity, with high nucleotide exchange rates and a fairly low GTP hydrolysis rate. Plays a role in control of the cell cycle, stress response, ribosome biogenesis and in those bacteria that undergo differentiation, in morphogenesis control. This Burkholderia orbicola (strain MC0-3) protein is GTPase Obg.